The sequence spans 328 residues: MAQSTMQHFIEQANHYGKQRTPFFFLIDFEKEKPLICPLENSAQQGIYFDILGKRNCTISPRPLPLNFTKHPMPFSHYQQGFKLVQSELQKGNSYLLNLTYPTEISGNLSLEQIFHQTNAPYKLWLQDQFVCFSPECFVNIHDNNIFTYPMKGTINATLPDAENQLLTNEKEQREHYTIVDLMRNDLSMVAEHIQVKKFRYIDRIKTQKGKILQTSSEIYGKLNENWQNQIGDILATLLPAGSISGAPKEKTTQIIQQAEKQKRGYYTGIFGIFDGKTLQSAVAIRFISQVDEKFYFHSGGGITIHSNAQDEYEELLEKVYLPIEGAD.

The protein to the C-terminal of para-aminobenzoate synthase component I.

This is an uncharacterized protein from Haemophilus influenzae (strain ATCC 51907 / DSM 11121 / KW20 / Rd).